The following is a 329-amino-acid chain: Glycerol-3-phosphate dehydrogenase [NAD(P)+] (329 aa).

Positions 11, 31, and 105 each coordinate NADPH. Sn-glycerol 3-phosphate contacts are provided by Lys-105, Gly-135, and Thr-137. Ala-139 is a binding site for NADPH. Sn-glycerol 3-phosphate-binding residues include Lys-190, Asp-243, Ser-253, Arg-254, and Asn-255. The Proton acceptor role is filled by Lys-190. Arg-254 contacts NADPH. NADPH-binding residues include Val-277 and Glu-279.

It belongs to the NAD-dependent glycerol-3-phosphate dehydrogenase family.

It is found in the cytoplasm. The enzyme catalyses sn-glycerol 3-phosphate + NAD(+) = dihydroxyacetone phosphate + NADH + H(+). It catalyses the reaction sn-glycerol 3-phosphate + NADP(+) = dihydroxyacetone phosphate + NADPH + H(+). It participates in membrane lipid metabolism; glycerophospholipid metabolism. Catalyzes the reduction of the glycolytic intermediate dihydroxyacetone phosphate (DHAP) to sn-glycerol 3-phosphate (G3P), the key precursor for phospholipid synthesis. This chain is Glycerol-3-phosphate dehydrogenase [NAD(P)+], found in Maridesulfovibrio salexigens (strain ATCC 14822 / DSM 2638 / NCIMB 8403 / VKM B-1763) (Desulfovibrio salexigens).